We begin with the raw amino-acid sequence, 280 residues long: MSTARPCAGLRAAVAAGMGLSDGPAGSSRGCRLLRPPAPAPALPGARLLRLPESEAVEAASPERSGWTEALRAAVAELRAGAVVAVPTDTLYGLACSASCSAALSCVYRLKGRSEAKPLAVCLGRVADVYRYCQVRVPRELLEDLFPGPVTLVMERSEELNKDLNPFTPLVGIRIPDHAFMLDLAQMFGGPLALTSANLSSQASSLSVEEFQDLWPHLSLVIDGGPIGDSESPECRLGSTVVDLSVPGKFGIIRSGCALENTTAILQGKYGLLPSQGSCS.

The N-terminal 56 residues, 1–56 (MSTARPCAGLRAAVAAGMGLSDGPAGSSRGCRLLRPPAPAPALPGARLLRLPESEA), are a transit peptide targeting the mitochondrion. Ser-61 carries the post-translational modification Phosphoserine. The region spanning 68–258 (TEALRAAVAE…KFGIIRSGCA (191 aa)) is the YrdC-like domain.

The protein belongs to the SUA5 family. As to quaternary structure, interacts with RSC1A1.

It is found in the cytoplasm. Its subcellular location is the mitochondrion. It localises to the cell membrane. It carries out the reaction L-threonine + hydrogencarbonate + ATP = L-threonylcarbamoyladenylate + diphosphate + H2O. Functionally, cytoplasmic and mitochondrial threonylcarbamoyl-AMP synthase required for the formation of a threonylcarbamoyl group on adenosine at position 37 (t(6)A37) in tRNAs that read codons beginning with adenine. Catalyzes the conversion of L-threonine, HCO(3)(-)/CO(2) and ATP to give threonylcarbamoyl-AMP (TC-AMP) as the acyladenylate intermediate, with the release of diphosphate. Participates in t(6)A37 formation in cytoplasmic and mitochondrial tRNAs. May regulate the activity of some transporters. The polypeptide is Threonylcarbamoyl-AMP synthase (Rattus norvegicus (Rat)).